The sequence spans 130 residues: Small ribosomal subunit protein uS8 (130 aa).

Belongs to the universal ribosomal protein uS8 family. In terms of assembly, part of the 30S ribosomal subunit.

One of the primary rRNA binding proteins, it binds directly to 16S rRNA central domain where it helps coordinate assembly of the platform of the 30S subunit. The protein is Small ribosomal subunit protein uS8 of Methanococcus vannielii (strain ATCC 35089 / DSM 1224 / JCM 13029 / OCM 148 / SB).